The following is a 333-amino-acid chain: Ketol-acid reductoisomerase (NADP(+)) (333 aa).

The region spanning 1 to 179 (MFYDDDADLS…GGTRAGVIKT (179 aa)) is the KARI N-terminal Rossmann domain. NADP(+) contacts are provided by residues 22 to 25 (YGSQ), lysine 45, serine 48, serine 50, and 80 to 83 (DTAQ). Histidine 105 is a catalytic residue. Residue glycine 131 coordinates NADP(+). The 146-residue stretch at 180–325 (TFKDETETDL…KKLRDLMSWV (146 aa)) folds into the KARI C-terminal knotted domain. Residues aspartate 188, glutamate 192, glutamate 224, and glutamate 228 each coordinate Mg(2+). Substrate is bound at residue serine 249.

Belongs to the ketol-acid reductoisomerase family. Requires Mg(2+) as cofactor.

It carries out the reaction (2R)-2,3-dihydroxy-3-methylbutanoate + NADP(+) = (2S)-2-acetolactate + NADPH + H(+). The catalysed reaction is (2R,3R)-2,3-dihydroxy-3-methylpentanoate + NADP(+) = (S)-2-ethyl-2-hydroxy-3-oxobutanoate + NADPH + H(+). Its pathway is amino-acid biosynthesis; L-isoleucine biosynthesis; L-isoleucine from 2-oxobutanoate: step 2/4. The protein operates within amino-acid biosynthesis; L-valine biosynthesis; L-valine from pyruvate: step 2/4. In terms of biological role, involved in the biosynthesis of branched-chain amino acids (BCAA). Catalyzes an alkyl-migration followed by a ketol-acid reduction of (S)-2-acetolactate (S2AL) to yield (R)-2,3-dihydroxy-isovalerate. In the isomerase reaction, S2AL is rearranged via a Mg-dependent methyl migration to produce 3-hydroxy-3-methyl-2-ketobutyrate (HMKB). In the reductase reaction, this 2-ketoacid undergoes a metal-dependent reduction by NADPH to yield (R)-2,3-dihydroxy-isovalerate. This is Ketol-acid reductoisomerase (NADP(+)) from Mycobacterium ulcerans (strain Agy99).